Here is a 600-residue protein sequence, read N- to C-terminus: Proline--tRNA ligase (600 aa).

Belongs to the class-II aminoacyl-tRNA synthetase family. ProS type 1 subfamily. As to quaternary structure, homodimer.

Its subcellular location is the cytoplasm. It carries out the reaction tRNA(Pro) + L-proline + ATP = L-prolyl-tRNA(Pro) + AMP + diphosphate. In terms of biological role, catalyzes the attachment of proline to tRNA(Pro) in a two-step reaction: proline is first activated by ATP to form Pro-AMP and then transferred to the acceptor end of tRNA(Pro). As ProRS can inadvertently accommodate and process non-cognate amino acids such as alanine and cysteine, to avoid such errors it has two additional distinct editing activities against alanine. One activity is designated as 'pretransfer' editing and involves the tRNA(Pro)-independent hydrolysis of activated Ala-AMP. The other activity is designated 'posttransfer' editing and involves deacylation of mischarged Ala-tRNA(Pro). The misacylated Cys-tRNA(Pro) is not edited by ProRS. The protein is Proline--tRNA ligase of Prochlorococcus marinus (strain MIT 9211).